A 268-amino-acid chain; its full sequence is Shikimate dehydrogenase (NADP(+)) (268 aa).

Shikimate is bound by residues 13 to 15 (SLS) and threonine 60. The active-site Proton acceptor is lysine 64. Position 76 (glutamate 76) interacts with NADP(+). Residues asparagine 85 and aspartate 100 each coordinate shikimate. Residues 124–128 (GAGGA), 148–153 (NRTMAR), and isoleucine 209 contribute to the NADP(+) site. Tyrosine 211 provides a ligand contact to shikimate. Glycine 232 is a binding site for NADP(+).

Belongs to the shikimate dehydrogenase family. Homodimer.

The catalysed reaction is shikimate + NADP(+) = 3-dehydroshikimate + NADPH + H(+). It participates in metabolic intermediate biosynthesis; chorismate biosynthesis; chorismate from D-erythrose 4-phosphate and phosphoenolpyruvate: step 4/7. Its function is as follows. Involved in the biosynthesis of the chorismate, which leads to the biosynthesis of aromatic amino acids. Catalyzes the reversible NADPH linked reduction of 3-dehydroshikimate (DHSA) to yield shikimate (SA). This is Shikimate dehydrogenase (NADP(+)) from Staphylococcus aureus (strain JH1).